The primary structure comprises 1403 residues: DNA-directed RNA polymerase subunit beta' (1403 aa).

Residues Cys-71, Cys-73, Cys-86, and Cys-89 each contribute to the Zn(2+) site. Positions 462, 464, and 466 each coordinate Mg(2+). The Zn(2+) site is built by Cys-820, Cys-893, Cys-900, and Cys-903.

This sequence belongs to the RNA polymerase beta' chain family. As to quaternary structure, the RNAP catalytic core consists of 2 alpha, 1 beta, 1 beta' and 1 omega subunit. When a sigma factor is associated with the core the holoenzyme is formed, which can initiate transcription. Mg(2+) serves as cofactor. Requires Zn(2+) as cofactor.

It carries out the reaction RNA(n) + a ribonucleoside 5'-triphosphate = RNA(n+1) + diphosphate. DNA-dependent RNA polymerase catalyzes the transcription of DNA into RNA using the four ribonucleoside triphosphates as substrates. The chain is DNA-directed RNA polymerase subunit beta' from Methylobacterium radiotolerans (strain ATCC 27329 / DSM 1819 / JCM 2831 / NBRC 15690 / NCIMB 10815 / 0-1).